Consider the following 182-residue polypeptide: Small ribosomal subunit protein uS4c (182 aa).

The segment at 12 to 31 (PGFTSKRPRSGSDLKNPLRS) is disordered. The region spanning 82 to 143 (MRLDNILFRL…KQRSKALIQN (62 aa)) is the S4 RNA-binding domain.

Belongs to the universal ribosomal protein uS4 family. In terms of assembly, part of the 30S ribosomal subunit. Contacts protein S5. The interaction surface between S4 and S5 is involved in control of translational fidelity.

The protein resides in the plastid. The protein localises to the chloroplast. One of the primary rRNA binding proteins, it binds directly to 16S rRNA where it nucleates assembly of the body of the 30S subunit. Its function is as follows. With S5 and S12 plays an important role in translational accuracy. The chain is Small ribosomal subunit protein uS4c (rps4) from Hymenocallis littoralis (Beach spider-lily).